A 379-amino-acid chain; its full sequence is MTGEEVKEPKEQQEITEVKEQEPEISYNAIVLNGVGGYDKVKVEVKKGVPTLKSDEILVRVQACGLNFSDLLVRQGAFGKHHSLGTECAGVVEAIGDLVIDRKVGDKIIMLNIDGGLWTELVVTTVNRTFLMPDGMSFQEAAAISVNYTAAYVMIYDFANLRPSQSILIHMAAGGVGIAATQLCKLVHDVTIFGTASPSKHETIKENGVTYPIDYTTLDYAEEVRKIAPKGVDIVLDPLGGADDSKGFGLLKPLGKLVLYGSANQVTAPKRSSLAAAKVWWHKFNIDALQLINSNKAVCGFHLGRTDPDHVAEVIRKLISLYKEGKIKPKVDSVWSFEQVGDAMRHMRNTRTLEKSSWSLKSRQLMPQLEIKSVSKRQG.

S273 bears the Phosphoserine mark.

It belongs to the zinc-containing alcohol dehydrogenase family. Quinone oxidoreductase subfamily. Cholinergic synaptic vesicles.

It localises to the cytoplasmic vesicle. The protein resides in the secretory vesicle. The protein localises to the synaptic vesicle membrane. In terms of biological role, may play a central role in the functions mediated by specific classes of synaptic vesicles. In Tetronarce californica (Pacific electric ray), this protein is Synaptic vesicle membrane protein VAT-1.